Here is a 20-residue protein sequence, read N- to C-terminus: 2-oxo-acid reductase (20 aa).

This sequence belongs to the AOR/FOR family. In terms of assembly, forms various types of homooligomers. [4Fe-4S] cluster is required as a cofactor. The cofactor is Mo-molybdopterin.

It localises to the cell membrane. The catalysed reaction is a (2R)-2-hydroxycarboxylate + A = a 2-oxocarboxylate + AH2. With respect to regulation, is inhibited by cyanide. Is sensitive to oxygen. Its function is as follows. Oxidoreductase with an extremely broad substrate specificity that can reduce reversibly 2-oxocarboxylates to (2R)-hydroxycarboxylates. The protein is 2-oxo-acid reductase of Proteus hauseri.